A 252-amino-acid chain; its full sequence is Type IV pilus assembly protein PilF (252 aa).

A signal peptide spans 1–17 (MTVRAALVFLLAVGLTG). Residue C18 is the site of N-palmitoyl cysteine attachment. C18 carries S-diacylglycerol cysteine lipidation. TPR repeat units lie at residues 32-67 (GRDE…LEID), 84-101 (EMEP…LASD), 104-133 (NARV…EASQ), 139-171 (ERSR…LRLN), 174-203 (QPSV…LFAQ), and 208-235 (NARS…GLQL).

In terms of assembly, interacts with PilQ; this interaction is essential for assemby of PilQ into secretins.

It is found in the cell outer membrane. Functionally, essential component of the type IV pilus (T4P) that plays a role in surface and host cell adhesion, colonization, biofilm maturation, virulence, and twitching, a form of surface-associated motility facilitated by cycles of extension, adhesion, and retraction of T4P fibers. Plays an essential role in the outer membrane localization and assembly of PilQ into secretins which are dodecamers of PilQ. This Pseudomonas aeruginosa (strain ATCC 15692 / DSM 22644 / CIP 104116 / JCM 14847 / LMG 12228 / 1C / PRS 101 / PAO1) protein is Type IV pilus assembly protein PilF (pilF).